Here is a 164-residue protein sequence, read N- to C-terminus: Lipoprotein signal peptidase (164 aa).

4 helical membrane-spanning segments follow: residues 2 to 22, 40 to 60, 70 to 90, and 99 to 119; these read MSLLTGTGLRWMWLAVFAIVL, VVITPFFNLVHVYNTGAAFSF, WLFSGLAIVISGVLAVAMAKA, and LAYSLVIGGAIGNLIDRVVYG. Residues aspartate 123 and aspartate 142 contribute to the active site. The helical transmembrane segment at 138-158 threads the bilayer; that stretch reads FNVADMAISCGAVFIILDGFI.

The protein belongs to the peptidase A8 family.

Its subcellular location is the cell inner membrane. The enzyme catalyses Release of signal peptides from bacterial membrane prolipoproteins. Hydrolyzes -Xaa-Yaa-Zaa-|-(S,diacylglyceryl)Cys-, in which Xaa is hydrophobic (preferably Leu), and Yaa (Ala or Ser) and Zaa (Gly or Ala) have small, neutral side chains.. It participates in protein modification; lipoprotein biosynthesis (signal peptide cleavage). In terms of biological role, this protein specifically catalyzes the removal of signal peptides from prolipoproteins. This Tolumonas auensis (strain DSM 9187 / NBRC 110442 / TA 4) protein is Lipoprotein signal peptidase.